Here is a 515-residue protein sequence, read N- to C-terminus: Membrane-bound transcription factor site-2 protease (515 aa).

The Cytoplasmic segment spans residues 1–3 (MIP). The chain crosses the membrane as a helical span at residues 4-24 (VSLLVVVVGGWTAVYLADLVL). At 25-74 (KSSVYFKHSYEDWLENNGLSISPFHIRWQTSIFNRAFYSWGRRKARMLYQ) the chain is on the lumenal side. 2 helical membrane passes run 75–95 (WFNFGMVFGVIAMFSSFFLLG) and 96–107 (KTLMQTLAQMMA). At 108-140 (DSPSPYSSSSSSSSSSSSSSSSSSSLHNEQVLQ) the chain is on the lumenal side. The helical transmembrane segment at 141-165 (VVVPGINLPVNQLTYFFAAVLISGV) threads the bilayer. H167 contacts Zn(2+). Residue E168 is part of the active site. The next 3 helical transmembrane spans lie at 170 to 182 (GHGIAAIREQVRF), 183 to 205 (NGFGIFLFIIYPGAFVDLFTTHL), and 225 to 247 (FVLALLGILALVLLPVILLPFYY). H171 is a Zn(2+) binding site. At 248–442 (TGVGVLITEV…LPVIVETFVK (195 aa)) the chain is on the lumenal side. N-linked (GlcNAc...) asparagine glycosylation is present at N333. Helical transmembrane passes span 443–460 (YLISLSGALAIVNAVPCF) and 461–472 (ALDGQWILNSFL). Residues 473-488 (DATLTSVIGDNDVKDL) lie on the Lumenal side of the membrane. Residues 489 to 509 (IGFFILLGGSVLLAANVTLGL) traverse the membrane as a helical segment. At 510–515 (WMVTAR) the chain is on the cytoplasmic side.

This sequence belongs to the peptidase M50A family. It depends on Zn(2+) as a cofactor.

The protein localises to the membrane. Its subcellular location is the cytoplasm. The protein resides in the golgi apparatus membrane. The catalysed reaction is Cleaves several transcription factors that are type-2 transmembrane proteins within membrane-spanning domains. Known substrates include sterol regulatory element-binding protein (SREBP) -1, SREBP-2 and forms of the transcriptional activator ATF6. SREBP-2 is cleaved at the site 477-DRSRILL-|-CVLTFLCLSFNPLTSLLQWGGA-505. The residues Asn-Pro, 11 residues distal to the site of cleavage in the membrane-spanning domain, are important for cleavage by S2P endopeptidase. Replacement of either of these residues does not prevent cleavage, but there is no cleavage if both of these residues are replaced.. In terms of biological role, zinc metalloprotease that mediates intramembrane proteolysis of proteins such as ATF6, ATF6B, SREBF1/SREBP1 and SREBF2/SREBP2. Catalyzes the second step in the proteolytic activation of the sterol regulatory element-binding proteins (SREBPs) SREBF1/SREBP1 and SREBF2/SREBP2: cleaves SREBPs within the first transmembrane segment, thereby releasing the N-terminal segment with a portion of the transmembrane segment attached. Mature N-terminal SREBP fragments shuttle to the nucleus and activate gene transcription. Also mediates the second step in the proteolytic activation of the cyclic AMP-dependent transcription factor ATF-6 (ATF6 and ATF6B). Involved in intramembrane proteolysis during bone formation. In astrocytes and osteoblasts, upon DNA damage and ER stress, mediates the second step of the regulated intramembrane proteolytic activation of the transcription factor CREB3L1, leading to the inhibition of cell-cycle progression. The polypeptide is Membrane-bound transcription factor site-2 protease (Mbtps2) (Mus musculus (Mouse)).